The primary structure comprises 155 residues: MAKGEGHILAQNKKARHDYHIVETVEAGIVLTGTEIKSVRAARIQLKDGFAQIKNGEAWLVNVHIAPFEQGNIWNADPERTRKLLLKKREITHLANELKGTGMTLVPLKVYLKDGFAKVLIGLAKGKHDYDKRETIKRRDQERDIKKQMKHYNAR.

Belongs to the SmpB family.

The protein localises to the cytoplasm. Its function is as follows. Required for rescue of stalled ribosomes mediated by trans-translation. Binds to transfer-messenger RNA (tmRNA), required for stable association of tmRNA with ribosomes. tmRNA and SmpB together mimic tRNA shape, replacing the anticodon stem-loop with SmpB. tmRNA is encoded by the ssrA gene; the 2 termini fold to resemble tRNA(Ala) and it encodes a 'tag peptide', a short internal open reading frame. During trans-translation Ala-aminoacylated tmRNA acts like a tRNA, entering the A-site of stalled ribosomes, displacing the stalled mRNA. The ribosome then switches to translate the ORF on the tmRNA; the nascent peptide is terminated with the 'tag peptide' encoded by the tmRNA and targeted for degradation. The ribosome is freed to recommence translation, which seems to be the essential function of trans-translation. The polypeptide is SsrA-binding protein (Streptococcus pyogenes serotype M4 (strain MGAS10750)).